The sequence spans 240 residues: Ribose-5-phosphate isomerase A (240 aa).

Substrate is bound by residues 41-44 (TGST), 94-97 (DGAD), and 107-110 (KGGG). The active-site Proton acceptor is E116. Substrate is bound at residue K134.

The protein belongs to the ribose 5-phosphate isomerase family. In terms of assembly, homodimer.

It catalyses the reaction aldehydo-D-ribose 5-phosphate = D-ribulose 5-phosphate. It functions in the pathway carbohydrate degradation; pentose phosphate pathway; D-ribose 5-phosphate from D-ribulose 5-phosphate (non-oxidative stage): step 1/1. Catalyzes the reversible conversion of ribose-5-phosphate to ribulose 5-phosphate. The protein is Ribose-5-phosphate isomerase A of Polaromonas sp. (strain JS666 / ATCC BAA-500).